Here is a 297-residue protein sequence, read N- to C-terminus: Adrenocorticotropic hormone receptor (297 aa).

The Extracellular portion of the chain corresponds to 1-23; it reads MKHIITPYEHTNDTARNNSDCPD. 2 N-linked (GlcNAc...) asparagine glycosylation sites follow: N12 and N17. Disulfide bonds link C21/C253 and C245/C251. Residues 24–49 traverse the membrane as a helical segment; it reads VVLPEEIFFTISIIGVLENLIVLLAV. The Cytoplasmic segment spans residues 50–58; that stretch reads VKNKNLQCP. Residues 59–79 form a helical membrane-spanning segment; that stretch reads MYFFICSLAISDMLGSLYKIL. The Extracellular portion of the chain corresponds to 80 to 104; the sequence is ENILIMFRNRGYLQPRGNFESTADD. Residues 105-126 traverse the membrane as a helical segment; that stretch reads IIDCMFILSLLGSIFSLSVIAA. At 127–147 the chain is on the cytoplasmic side; sequence DRYITIFHALQYHSIVTMRRT. Residues 148-168 traverse the membrane as a helical segment; the sequence is IITLTVIWIFCTGSGIAMVIF. Over 169–180 the chain is Extracellular; sequence SHHVPTVLTFTS. Residues 181 to 199 traverse the membrane as a helical segment; that stretch reads LFPLMLVFILCLYIHMFLL. The Cytoplasmic portion of the chain corresponds to 200–217; that stretch reads ARSHARKISTLPRANMKG. Residues 218-244 form a helical membrane-spanning segment; it reads AITLTILLGVFIFCWAPFILHVLLMTF. Residues 245 to 256 are Extracellular-facing; that stretch reads CPNNPYCVCYMS. A helical membrane pass occupies residues 257 to 278; the sequence is LFQINGMLIMCNAVIDPFIYAF. Residues 279-297 lie on the Cytoplasmic side of the membrane; the sequence is RSPELRDAFKKMFSCHRYQ. C293 carries the S-palmitoyl cysteine lipid modification.

This sequence belongs to the G-protein coupled receptor 1 family. Homodimer. Interacts with corticotropin (ACTH). Interacts with MRAP; this interaction targets MC2R to the plasma membrane. Interacts with MRAP2; competing with MRAP for binding to MC2R and impairing the binding of corticotropin (ACTH). In terms of processing, ubiquitinated by MGRN1 that may be involved in post-endocytic trafficking and/or degradation of internalized receptor.

The protein resides in the cell membrane. In terms of biological role, hormone receptor primarily expressed in adrenal cortex that plays a key role in regulating adrenocortical function. Upon corticotropin (ACTH) binding, facilitates the release of adrenal glucocorticoids, including cortisol and corticosterone. In addition, MC2R is required for fetal and neonatal adrenal gland development. Mechanistically, activates adenylate cyclase (cAMP), the MAPK cascade as well as the cAMP-dependent protein kinase A pathway leading to steroidogenic factor 1/NR5A1-mediated transcriptional activation. The sequence is that of Adrenocorticotropic hormone receptor (MC2R) from Mesocricetus auratus (Golden hamster).